We begin with the raw amino-acid sequence, 749 residues long: Protein SWAP (749 aa).

The tract at residues 8–124 (SNVHVQEYKD…RNDQRNAIGF (117 aa)) is dry CEEERYL. The span at 105 to 118 (EQEKEEEEKRRNDQ) shows a compositional bias: basic and acidic residues. Residues 105–149 (EQEKEEEEKRRNDQRNAIGFDYGTGKVKARESDSEDEPFEPPEGI) are disordered. The SURP motif 1 repeat unit spans residues 166 to 209 (IIEKTASFIVANGTQMEIVIKAKQRNNAEQFGFLEFDHRLNPFY). The interval 256–310 (HGSDSEDSDSDYELHPSLLSGGAKRPVTPEKPGAIGPRKKPVEPEKPPDFTLKPV) is disordered. The SURP motif 2 repeat unit spans residues 391 to 431 (ILNSYAEHVAQRGLEAEASLAAREDLQLHFMEPKSPYYSYY). Positions 458 to 478 (PAPPSAVSSPGPSSLMSLNLS) are enriched in low complexity. 3 disordered regions span residues 458-498 (PAPP…SSRL), 537-592 (LRND…QVDR), and 608-749 (KAKK…DRRR). Positions 538 to 552 (RNDEPRDESSFRFDP) are enriched in basic and acidic residues. A compositionally biased stretch (polar residues) spans 560-569 (PSDTTANFSD). A compositionally biased stretch (pro residues) spans 574-583 (FPPPTPPVIP). Basic and acidic residues-rich tracts occupy residues 608 to 659 (KAKK…RSLD) and 679 to 689 (EEMKRTDEDRE). Basic residues-rich tracts occupy residues 690–704 (RKRH…RRSR) and 714–749 (EHKK…DRRR).

Its function is as follows. It is a regulator of pre-mRNA splicing (and, possibly, of other RNA processing events). It may regulate its own expression at the level of RNA processing. In Caenorhabditis elegans, this protein is Protein SWAP (swp-1).